A 492-amino-acid chain; its full sequence is Lipopolysaccharide biosynthesis protein WzxC (492 aa).

Residues 1–12 lie on the Cytoplasmic side of the membrane; sequence MSLREKTISGAK. Residues 13–33 traverse the membrane as a helical segment; that stretch reads WSAIATVIIIGLGLVQMTVLA. Residues 34–42 lie on the Periplasmic side of the membrane; it reads RIIDNHQFG. Residues 43–63 traverse the membrane as a helical segment; that stretch reads LLTVSLVIIALADTLSDFGIA. Over 64 to 81 the chain is Cytoplasmic; sequence NSIIQRKEISHLELTTLY. A helical transmembrane segment spans residues 82-102; the sequence is WLNVGLGIVVCVAVFLLSDLI. Residues 103–104 are Periplasmic-facing; it reads GD. Residues 105–125 traverse the membrane as a helical segment; sequence VLNNPDLAPLIKTLSLAFVVI. The Cytoplasmic segment spans residues 126–157; that stretch reads PHGQQFRALMQKELEFNKIGMIETSAVLAGFT. A helical membrane pass occupies residues 158-178; the sequence is CTVVSAHFWPLAMTAILGYLV. At 179-236 the chain is on the periplasmic side; sequence NSAVRTLLFGYFGRKIYRPGLHFSLASVAPNLRFGAWLTADSIINYLNTNLSTLVLAR. A helical membrane pass occupies residues 237–257; the sequence is ILGAGVAGGYNLAYNVAVVPP. Residues 258–288 are Cytoplasmic-facing; it reads MKLNPIITRVLFPAFAKIQDDTEKLRVNFYK. Residues 289–309 form a helical membrane-spanning segment; sequence LLSVVGIINFPALLGLMVVSN. The Periplasmic portion of the chain corresponds to 310 to 322; it reads NFVPLVFGEKWNS. Residues 323 to 343 form a helical membrane-spanning segment; sequence IIPVLQLLCVVGLLRSVGNPI. The Cytoplasmic segment spans residues 344–364; that stretch reads GSLLMAKARVDISFKFNVFKT. The chain crosses the membrane as a helical span at residues 365–385; sequence FLFIPAIVIGGQMAGAIGVTL. Residue Gly386 is a topological domain, periplasmic. The chain crosses the membrane as a helical span at residues 387-407; that stretch reads FLLVQIINTILSYFVMIKPVL. Residues 408–417 lie on the Cytoplasmic side of the membrane; it reads GSSYRQYILS. A helical transmembrane segment spans residues 418–438; that stretch reads LWLPFYLSLPTLVVSYALGIV. At 439 to 445 the chain is on the periplasmic side; that stretch reads LKGQLAL. A helical transmembrane segment spans residues 446 to 466; it reads GMLLAVQIATGVLAFVVMIVL. Residues 467–492 lie on the Cytoplasmic side of the membrane; sequence SRHPLVVEVKRQFCRSEKMKMLLRAG.

This sequence belongs to the polysaccharide synthase family.

Its subcellular location is the cell inner membrane. The protein operates within bacterial outer membrane biogenesis; lipopolysaccharide biosynthesis. This is Lipopolysaccharide biosynthesis protein WzxC (wzxC) from Escherichia coli (strain K12).